An 83-amino-acid chain; its full sequence is Putative membrane protein insertion efficiency factor (83 aa).

The disordered stretch occupies residues 63-83 (GGNDPVPDHFSLRRNKTDISD). The segment covering 68-83 (VPDHFSLRRNKTDISD) has biased composition (basic and acidic residues).

It belongs to the UPF0161 family.

It localises to the cell membrane. Functionally, could be involved in insertion of integral membrane proteins into the membrane. In Streptococcus agalactiae serotype Ia (strain ATCC 27591 / A909 / CDC SS700), this protein is Putative membrane protein insertion efficiency factor.